The sequence spans 291 residues: Acetyl-coenzyme A carboxylase carboxyl transferase subunit beta (291 aa).

In terms of domain architecture, CoA carboxyltransferase N-terminal spans 23–291; that stretch reads VWHKCPSCTA…PPDLPVEESV (269 aa). Positions 27, 30, 46, and 49 each coordinate Zn(2+). The C4-type zinc finger occupies 27–49; sequence CPSCTAVLYRVELERNLEVCPKC.

This sequence belongs to the AccD/PCCB family. As to quaternary structure, acetyl-CoA carboxylase is a heterohexamer composed of biotin carboxyl carrier protein (AccB), biotin carboxylase (AccC) and two subunits each of ACCase subunit alpha (AccA) and ACCase subunit beta (AccD). Zn(2+) serves as cofactor.

The protein resides in the cytoplasm. The catalysed reaction is N(6)-carboxybiotinyl-L-lysyl-[protein] + acetyl-CoA = N(6)-biotinyl-L-lysyl-[protein] + malonyl-CoA. It participates in lipid metabolism; malonyl-CoA biosynthesis; malonyl-CoA from acetyl-CoA: step 1/1. Component of the acetyl coenzyme A carboxylase (ACC) complex. Biotin carboxylase (BC) catalyzes the carboxylation of biotin on its carrier protein (BCCP) and then the CO(2) group is transferred by the transcarboxylase to acetyl-CoA to form malonyl-CoA. The protein is Acetyl-coenzyme A carboxylase carboxyl transferase subunit beta of Coxiella burnetii (strain RSA 331 / Henzerling II).